The primary structure comprises 103 residues: Small ribosomal subunit protein uS10 (103 aa).

It belongs to the universal ribosomal protein uS10 family. As to quaternary structure, part of the 30S ribosomal subunit.

In terms of biological role, involved in the binding of tRNA to the ribosomes. This chain is Small ribosomal subunit protein uS10, found in Acidovorax sp. (strain JS42).